We begin with the raw amino-acid sequence, 197 residues long: Ribonuclease HII (197 aa).

The RNase H type-2 domain occupies 7–197 (LGIAGVDEVG…SFLRKLFATV (191 aa)). 3 residues coordinate a divalent metal cation: D13, E14, and D109.

It belongs to the RNase HII family. Mn(2+) is required as a cofactor. Requires Mg(2+) as cofactor.

It is found in the cytoplasm. It carries out the reaction Endonucleolytic cleavage to 5'-phosphomonoester.. Functionally, endonuclease that specifically degrades the RNA of RNA-DNA hybrids. The sequence is that of Ribonuclease HII from Synechococcus sp. (strain CC9311).